We begin with the raw amino-acid sequence, 418 residues long: L-rhamnose isomerase (418 aa).

Residues His262, Asp294, and Asp296 each contribute to the Mn(2+) site.

This sequence belongs to the rhamnose isomerase family. In terms of assembly, homotetramer. It depends on Mn(2+) as a cofactor.

It localises to the cytoplasm. The enzyme catalyses L-rhamnopyranose = L-rhamnulose. The protein operates within carbohydrate degradation; L-rhamnose degradation; glycerone phosphate from L-rhamnose: step 1/3. In terms of biological role, catalyzes the interconversion of L-rhamnose and L-rhamnulose. The protein is L-rhamnose isomerase of Yersinia pseudotuberculosis serotype O:1b (strain IP 31758).